We begin with the raw amino-acid sequence, 109 residues long: uncharacterized protein (109 aa).

It localises to the mitochondrion. This is an uncharacterized protein from Marchantia polymorpha (Common liverwort).